Here is a 547-residue protein sequence, read N- to C-terminus: Sodium/hydrogen exchanger 9B2 (547 aa).

Positions 1–68 (MEDEDKTAEC…PQDSPTEPNG (68 aa)) are disordered. Topologically, residues 1–86 (MEDEDKTAEC…ACPPRGCLAR (86 aa)) are cytoplasmic. The segment covering 23–45 (APPHHELQEERVMSLRGTDRSEP) has biased composition (basic and acidic residues). Ser-49 carries the post-translational modification Phosphoserine. The chain crosses the membrane as a helical span at residues 87 to 104 (VITNGTMVVLLWAMVWSV). Residues 105 to 113 (TGPECLPGG) are Extracellular-facing. A helical membrane pass occupies residues 114 to 133 (NLFGIIILFYCSITGGKLFG). Topologically, residues 134 to 144 (LIKFPTLPPLP) are cytoplasmic. A helical membrane pass occupies residues 145 to 161 (PLLGMLLAGFLLRNIPV). Over 162–171 (INDSVRIQHK) the chain is Extracellular. A helical transmembrane segment spans residues 172-189 (WSSSLRSIALSVILVRAG). The Cytoplasmic segment spans residues 190-200 (LGLDSKALRKL). A helical membrane pass occupies residues 201-227 (KGVCVRLAMGPCIVEACASAILSHFLM). Residues 228–233 (GLPWQW) are Extracellular-facing. A helical transmembrane segment spans residues 234 to 242 (GFILGFVVG). The Cytoplasmic segment spans residues 243-270 (AVSPAVVVPSMLLLQEGGYGVGKGIPTL). Na(+) is bound by residues Val-244, Gly-275, Asp-278, and Asp-279. The chain crosses the membrane as a helical span at residues 271-290 (LMAAGSFDDILAITGFNTCL). The Extracellular portion of the chain corresponds to 291–300 (GVAFSTGSTV). Residues 301–324 (FNIFRGILEVVIGVAAGSFLGFFI) traverse the membrane as a helical segment. The Cytoplasmic portion of the chain corresponds to 325 to 339 (QYFPSRDQDNLVWKR). A helical membrane pass occupies residues 340–357 (AFLVLGFAVLAVFSSVYF). The Extracellular segment spans residues 358–361 (SFPG). Residues 362-373 (SGGLCTLVMAFL) form a helical membrane-spanning segment. At 374–390 (AGMRWTDKKSEVEKVIA) the chain is on the cytoplasmic side. The helical transmembrane segment at 391–411 (VTWDVFQPLLFGLIGAEVSIV) threads the bilayer. At 412–417 (SLRAET) the chain is on the extracellular side. Residues 418 to 440 (VGLCVATLSIAVLIRILTTFLMV) traverse the membrane as a helical segment. Residues 441–461 (CFAGFNIKEKIFISFAWLPKA) are Cytoplasmic-facing. The chain crosses the membrane as a helical span at residues 462–473 (TVQAAIGSVALD). Residues 474-486 (TARSHGEKQLEDY) are Extracellular-facing. Residues 487–509 (GMDVLTVAFLAILITAPIGSLLI) traverse the membrane as a helical segment. Residues 510–547 (GLLGPRVLQKSEHRTEEEVQGETSAHIQRKPEDSITEA) lie on the Cytoplasmic side of the membrane. The segment at 522–547 (HRTEEEVQGETSAHIQRKPEDSITEA) is disordered. The span at 538–547 (RKPEDSITEA) shows a compositional bias: basic and acidic residues.

It belongs to the monovalent cation:proton antiporter 1 (CPA1) transporter (TC 2.A.36) family. Homodimer; dimerization is essential for SLC9B2 activity. Lipids seem to play a role in the stabilization of the dimerization subdomain. As to expression, widely expressed. However expression seems to be restricted to specific cell types within individual organs, e.g. osteoclasts in the bone, distal tubules of the kidney or beta-cells of Langerhans islets. In sperm specifically present in the principal piece of sperm tail (at protein level).

The protein resides in the cell membrane. It is found in the mitochondrion membrane. Its subcellular location is the endosome membrane. The protein localises to the lysosome membrane. It localises to the recycling endosome membrane. The protein resides in the cytoplasmic vesicle. It is found in the secretory vesicle. Its subcellular location is the synaptic vesicle membrane. The protein localises to the cell projection. It localises to the cilium. The protein resides in the flagellum membrane. It is found in the basolateral cell membrane. Its subcellular location is the apical cell membrane. The enzyme catalyses Na(+)(in) + H(+)(out) = Na(+)(out) + H(+)(in). It catalyses the reaction Li(+)(out) + H(+)(in) = Li(+)(in) + H(+)(out). The catalysed reaction is Li(+)(in) + Na(+)(out) = Li(+)(out) + Na(+)(in). With respect to regulation, allosterically inhibited by the N-terminal domain. Inhibited by phloretin. Its function is as follows. Electroneutral Na(+) Li(+)/H(+) antiporter that extrudes Na(+) or Li(+) in exchange for external protons across the membrane. Uses the proton gradient/membrane potential to extrude sodium. Contributes to the regulation of intracellular pH and sodium homeostasis. Also able to mediate Na(+)/Li(+) antiporter activity in kidney. May play a physiological role in renal tubular function and blood pressure homeostasis. Plays an important role for insulin secretion and clathrin-mediated endocytosis in beta-cells. Involved in sperm motility and fertility. It is controversial whether SLC9B2 plays a role in osteoclast differentiation or not. This Mus musculus (Mouse) protein is Sodium/hydrogen exchanger 9B2.